We begin with the raw amino-acid sequence, 5381 residues long: MSSHSGGTDWNSVIKALLLSRTGALNKNEVVNLLKAITRCEHEFFDDEGSFVPFYTAFAALAADKLMQIKSICQTQICQLHDATAVLIRFILFRLPKVSVFESKWLLAALKMLCEGRENASSAVAQFDYSAVAGVVKSSKHPESSNKSIMSMAGSTTGGAGAGGSNDKESPKLEIKRSRSDLSSVILQQLLAPLEPGKMTWVPLSEEITDCTEQLLAANVEVFQEANGVDTLLDICVGLPILSRYRMKYMETINAGKPLYLPLTQAEATTVKSSMNHMLTDLSIVGQAYALIVMQPLTPSRIEKLSMCGISALYNAVLTSIATSVLSMGQASSAQKQQQQQTAAAASTSQGSGGGLSSVQTSKDHDEFEEQASGIVNKALEIYSSIGEMFKSSARMYIYQNHLCYGSWLLISGIQGAMGASGSASAETAAKAAAATKVASKTESITAPSTPIARVNLFKVQQGFGELNAAIANHSIKLLSELIEDLKIESACGQSSVTDPETLPEPAQFDILQNYTSLERIVRVLNTATLHQLFTFLATVAYRKACTLKRASTKDRTECDPISYSDSTTCLNESMSYSDNSEEDDSESYLGHWFKETLSPETHDDNANTSSQERSGEQKSALVPKLDEPHEYLELSADIFCFLDQFLANRHAYMQRYVKAGVSDQQMLLMANIIKDFDRDVMRNDSEQQSPPSTAAAVAAATGAGSSGSSAKWQASMIRFSGAAGRYIHNLISTGLLSEQLQSNLLQHLAISPWSTDTNTWPLQVYPSTLSVLVQILLLKPIQEKEAACLSVWHRLINTLVDGVCSSSSAGDSDYEDINIEHAQLLLFLFHSLNLMQKKSILLLTAGGVIRCAEVCRGISAERVVRNSQMMLLSRLLVFLEYLMKHLYHAPPELLDQVRWILFSVSSMPETQKVSDLINSRTKLNSYCRQDIEEKFRKSSGEYGSNIRPTFYSLVVKEPEKAYWVSEFKLDGLAWNFILCTPDKLKYPLLVDALVDILNIADMSSFSRKENSESNSIHNLCAMQYCFTNTWKLLLGLPPSTSHVEALRIERAPNLHSLVWSTRLPLATSHYLIVNSLIKQGMYTQYAESLYTQVGDTTADIRYNLKQTILGVEAFNQQMSNKGIPRLSELILFDALVAHMQAVAWAEKEGFKLLRKDCEDSSGGDQSSCTSAASSSGGNATDHDHPEVYSSNESIDEEKSKHEDDQGLSTETLQRNQMINELLIKLMDSYRYLSEIVREQMLKQLSSTTPEHVLNLIVPIVSDKPAIMLELHAAFLKLLPNEDKQLIANEWPKCLMVNDSAFDGKQHPVEPYTLNVIDAHITELTRGSGGVAYSTLHTLKHCLKTILHLMELLLPYASNCTEMDAQLKPLLIASMLDMRTDYLQGQSEQCLREILSGLTLEAQKLLLYEHMIGYCYRMLIEFAAELRQPAAGGTPLDQERALFNESMLFAVLKTFIKMLEKPTAVQAMRQFFHDQKTGSLTTLLLSFTGTTLPLSYARKMLQFVERLFEQSTRADSQFQHEDLVDCFSDLATVDVARLKLWLAHIIYGPNMTAGDVSNSETMDPTCRLLTSIMQPSSSSSSNAQTPTNMATVSAMPSISDQLDAMDIDYDCGAAAGAAGAAPNTSQILSLWQAAQPNPSEESSQACDHSEGGEQRQSERNGGLLLSITKYLVRDQSKAGPIAAPLFQALLQLGQTLISPPHDGCDFADVLQIMITLADASPARGHVALFNTTLLWLELAKLQLPDKHLRHAENVSALLRYLSELLQSIGYRGSRQHMPPWDDELQTDIDDLYDELAEEEQDSLLDDSDEDTLNNKLCTFSQTQKEFMNQHWYHCHTCNMINTVGVCSVCARVCHKGHDVSYAKYGNFFCDCGAKEDGSCQALSRRLGSGEVRESVGPGGSSSCSYLPSHMSLLASKKRSNTAPGATQQQHGAPARKDSISSERIQLLGKLLEPYRETLQHQEQWMLVVRCILEYFDVLLPSIRENCTLYSIVGCHRRATAALQRLHQLEQSFQITDQLMFATLGSQEGAFENVRMNYSGDQGQTIKHLLTSGTIRRVAFCCLSSPHGRRQQLAVSHEKGKVTILQLSALLKQADASKRKLTLTQLSSAPIACTVLSLAANPCNEDCLAVCGLKECHVLTFSSSGSTNEHIVITPQLENGNFLKKAMWLPGSQTLLAIVTTDYVKIYDLSVDTISPKYYYLVAVGKIKDCTFMYHQQDGSGSYFMLSFTSSGYIYTQQLDQQSLAVHGDFYVTNTLELSHQHIKDINGQVCGGGVSIYYSHALQLLFYSYTCGRSFCSPLTNVNEGVKGIYHLDINNTAASTASKSSSASKVPLQSLVGWTEVAGHPGLIYASMHTSNNPVILMITPERIYMQEIKAQSAKSRIMDVVGIRHSVAGTEKTTLLLLCEDGSLRIFSAQPEHTSFWLSPQVQPFGNQLYSSTLLAKNTTNNPQGKSKGGGSAAAGKLLHRKASSQQHQKQLTSGGQPIFPIDFFEHCNMLADVEFGGNDLLQIYNKQKLKTRLFSTGMFVASTKATGFTLEVVNNDPNVVMVGFRVMLGTQDIQRAPVSVTILGRTIPTTMRKARWFDIPLTREEMFQSDKMLKVVFAKSQDPEHVTLLDSIEVYGKSKELVGWPDDSEDVPAPSSGPTPVTATQQSAAANFGEGFNCITQLDRMVNHLLEVLDCALHLLGGSAVAAPLRSKVVKTASGLLLLPTPNPVQTQARYVLATLYGSRAAYHSFKDGVILHFVHGELQAMQPKLQQLESLQEIDPEAFYRLILLVRGVANSRPQSLAKICLENSYDLVPDLMRIVLELHKITPDLDEPVNIVRRGLCQPETIVHCLVEIMYGFALADPGQVGRMTQYFIDLLKHDATVISHSAKEALILLLSPRMKRRKVAAIAVITPPACSTPTPQMQALQAVAASAANDIIEEAAGVAAGQDQDNAAAALLEAVEGGLPGQQANHQLLNLEAFMGGGFPRLLGLPEDGDDEAIMDIAIALSLQQHGGADANALHSLQQGLANIQGIRQAAANAAAASVSVSVSAGGSDDEGSNVATDGSTLRTSPAEPAGSGGSESGGSGVESIGGTSARSSNFGDHPNTTPPRQSCSSVKDGEPGEEQQPGPSGSGGSASVPGGGLSAMSSTEDNNEINEDEKLQKLHDLRIAVLESIIQHLGTFDLCNGLQAIPLIQVIHMLTTDLNGNNERDQQVLQELLQALVEYVEIGKRGAASRMENKCPGNEVRLALLSLFGVMMGKTKSKQTGTTSPPHQFKDNSSFVASTTANVLSKSGAFVYALEALNTLLVHWKTVLGDPYAPGQAAAPIASGGATSGPGVQLLKPVKHGPKPDISILIPQNYLKNYPDIFESYDGLLTEIIVRLPYQILRLSSAHPDNYDSSFCEAMTFTLCEYMMLNLNTLLRRQVRKLLMYICGSKEKFRMYRDGHSLDAHFRVVKRVCSIVSSKTGAPYNANPPMLSYDSLVDLTEHLRTCQEISQMRTGNWQKFCVVHEDALAMLMEIACYQLDDGVSPIIIQLLQAAVCNMPANKQQQQQQQPPPAVVSASSKLRSDREKSEDTDAYYSKFDPAQCGTFVHQIFRYACDALIIRFVRIFLLENNISQLRWQAHSFMTGLFEHANERQREKLLTIFWNLWPLVPTYGRRTAQFVDLLGYLTLTTRSITERLPEFVSRAVEVLRTQNELLCKHPNAPVYTTLESILQMNGYYLESEPCLVCNNPEVPMANIKLPSVKSDSKYTTTTMIYKLVQCHTISKLIVRIADLKRTKMVRTINVYYNNRSVQAVVELKNRPALWHKARSVSLQSGQTELKIDFPLPITACNLMIEFADFFETVSGSSENLQCPRCSAAVPAYPGVCGNCGENVFQCHKCRAINYDEKDPFLCHSCGFCKYAKFDFSMYARVCCAVDPIESAEDRAKTVLMIHTSLERADRIYHQLLANKQLLELLIQKVAEHRINDRLVEDNMASVHSTSQVNKIIQLLAQKYCVESRASFEELSKIVQKVKACRSELVAYDRQQQDLPPSNLALVLGAENPTTNRCYGCALASTEQCLTLLRAMAYNYDCRMGLYSQGLVSELAEHNLRRGTPQIQNEVRNLLVVLTKDNAEACMHLLQLVTSRVKSALMGSIPLISLEAAVHQEMTLLEVLLSQDDLCWEYKLKVIFELFISNCKLPRGPVASVLHPCLRILQSLINPTISGSGSGGKPVSAIELSNIKLPEGNTIDYRAWLNSDQNHEYLAWSSRMPISHHQQDAPAGTKPKSSKQQQSAGTETPPRKSKEAARAAYLGEKFGKRWRSNVLDKQRVTKPLVFNAEWIQPLLFNENSRFGRQLACTLLGGLARTHERKQQALNLLTSFLYHVGDAGEASNEYLALYRSIATESPWLQYLVLRGVLCKISSLLATEIAKVHCMEEHSLSSDLTLGYALRRYVELLWLFLECPNIRRTYKTRLLGPVLESYLALRSLVVQRTRHIDEAQEKLLEMLEEMTSGTEEETRAFMEILIDTVDKTRMNDIKTPVFIFERLYSIIHPEEHDESEFYMTLEKDPQQEDFLQGRMLGNPYPSGEMGLGPLMRDVKNKICTDCELIALLEDDNGMELLVNNKIISLDLPVKDVYKKVWLAEGGDRDAMRIVYRMRGLLGDATEEFVETLNNKSQEAVDTEQLYRMANVLADCNGLRVMLDRIGSLQRISRQRELIQVLLKLFLICVKVRRCQEVLCQPEIGAINTLLKVLQMCLQSENDSIQSAVTEQLLEIMETLLSKAASDTLDSFLQFSLTFGGPEYVSALISCTDCPNVRNNPSVLRHLIRVLAALVYGNEVKMALLCEHFKDTLNFKRFDNERTPEEEFKLELFCVLTNQIEHNCIGGTLKDYIVSLGIVERSLAYITEHAPCVKPTLLRTDSDELKEFISRPSLKYILRFLTGLSNHHEATQVAISKDIIPIIHRLEQVSSDEHVGSLAENLLEALSTDAATAARVQQVRDFTRAEKKRLAMATREKQLDALGMRTNEKGQVTAKGSILQKIEKLRDETGLTCFICREGYACQPEKVLGIYTFTKRCNVEEFELKSRKTIGYTTVTHFNVVHVDCHTSAIRLTRGRDEWERASLQNANTRCNGLLPLWGPSVLETTFSASMTRHSSYMQESTQRCDISYTSSIHDLKLLLVRFAWERSFHDDAGGGGPQSNMHFVPYLLFYSIYMLLSSRSAARDSKTVLAYLTAPPSEKWLECGFEVEGPLYMITISVTLHSRELWNKHKVAHLKRMLAVAQARHVSPSVLCKALLAPADRQVKDYSVYKPYLMMWAMIDMIYNILFKLVTMPKEEAWPVSLFDYIRKNDEAMLKSTDGILHILTEELLPCTSFGEFCDVAGLLTLIEQPDSFIEDLLASLPSTTSSS.

Disordered stretches follow at residues Lys140 to Glu174, Gln339 to Asp364, Ser599 to Ala621, Arg683 to Ser709, Ser1162 to Thr1212, and Gln1632 to Arg1659. Low complexity predominate over residues Gln339–Gln350. Composition is skewed to low complexity over residues Ser690–Ser709 and Ser1167–Ser1176. Residues Gln1632–Cys1646 show a composition bias toward polar residues. Basic and acidic residues predominate over residues Asp1647–Glu1658. The segment at Lys1815–Arg1884 adopts a UBR-type zinc-finger fold. Disordered stretches follow at residues Lys1917 to Ile1939, Lys2443 to Thr2479, Pro2632 to Gln2652, Val3037 to Glu3143, Lys3537 to Lys3562, and His4247 to Ala4280. Composition is skewed to polar residues over residues Asn1920–His1930, Ser2470–Thr2479, Ser2643–Gln2652, and Asn3048–Thr3058. Positions Gly3065–Gly3075 are enriched in gly residues. A compositionally biased stretch (polar residues) spans Ala3084–Ser3104. Over residues Ser3119–Leu3132 the composition is skewed to gly residues. The segment at Pro4904 to Leu5374 is UBR4 E3 catalytic module. A HemiRING-type zinc finger spans residues Gly5022–Arg5136. Zn(2+)-binding residues include Cys5025, Cys5028, His5074, and Cys5077. The UZI domain occupies Ile5139–Leu5374.

Belongs to the UBR4 family.

Functionally, has a role in growth of the perineurial glial layer of the larval peripheral nerve. May have a role in male fertility and eye development or function. May bind calmodulin. This is Protein purity of essence from Drosophila pseudoobscura pseudoobscura (Fruit fly).